We begin with the raw amino-acid sequence, 117 residues long: Protein OPG035 (117 aa).

This sequence belongs to the poxviridae OPG035 family.

Its function is as follows. Bcl-2-like protein which contributes to virulence by preventing host NF-kappa-B activation in response to pro-inflammatory stimuli such as TNF-alpha or IL1B. This chain is Protein OPG035 (OPG035), found in Homo sapiens (Human).